A 96-amino-acid chain; its full sequence is Fluoride-specific ion channel FluC 1 (96 aa).

The next 2 membrane-spanning stretches (helical) occupy residues 4–24 and 26–46; these read LIQGLGVGAGAALGVCVRLAL and LWLGDSAWPILTINVLGAFLM. Residues glycine 61 and threonine 64 each contribute to the Na(+) site. The chain crosses the membrane as a helical span at residues 69-89; the sequence is MMLNDVSFYFFTAVGCILAWL.

It belongs to the fluoride channel Fluc/FEX (TC 1.A.43) family.

It is found in the cell membrane. The catalysed reaction is fluoride(in) = fluoride(out). With respect to regulation, na(+) is not transported, but it plays an essential structural role and its presence is essential for fluoride channel function. In terms of biological role, fluoride-specific ion channel. Important for reducing fluoride concentration in the cell, thus reducing its toxicity. This Corynebacterium glutamicum (strain ATCC 13032 / DSM 20300 / JCM 1318 / BCRC 11384 / CCUG 27702 / LMG 3730 / NBRC 12168 / NCIMB 10025 / NRRL B-2784 / 534) protein is Fluoride-specific ion channel FluC 1.